Reading from the N-terminus, the 3255-residue chain is Genome polyprotein (3255 aa).

Positions valine 292 to tyrosine 437 constitute a Peptidase S30 domain. Active-site for P1 proteinase activity residues include histidine 345, aspartate 354, and serine 388. Positions lysine 489 to cysteine 492 match the Involved in interaction with stylet and aphid transmission motif. The Involved in virions binding and aphid transmission signature appears at proline 747 to lysine 749. A Peptidase C6 domain is found at methionine 773 to glycine 895. Active-site for helper component proteinase activity residues include cysteine 781 and histidine 854. The Helicase ATP-binding domain occupies glutamate 1397–glutamate 1549. An ATP-binding site is contributed by glycine 1410 to serine 1417. The DECH box signature appears at aspartate 1499 to histidine 1502. The Helicase C-terminal domain occupies aspartate 1568 to serine 1727. Positions glutamate 2062–lysine 2069 match the Nuclear localization signal motif. Tyrosine 2084 is subject to O-(5'-phospho-RNA)-tyrosine. The Peptidase C4 domain occupies serine 2215–asparagine 2433. Residues histidine 2260, aspartate 2295, and cysteine 2365 each act as for nuclear inclusion protein A activity in the active site. Residues tryptophan 2699–leucine 2823 enclose the RdRp catalytic domain. The interval threonine 2980–glycine 3027 is disordered. Residues lysine 2989–isoleucine 3005 show a composition bias toward basic and acidic residues.

This sequence belongs to the potyviridae genome polyprotein family. Interacts with host eIF4E protein (via cap-binding region); this interaction mediates the translation of the VPg-viral RNA conjugates. Part of a complex that comprises VPg, RNA, host EIF4E and EIF4G; this interaction mediates the translation of the VPg-viral RNA conjugates. Post-translationally, VPg is uridylylated by the polymerase and is covalently attached to the 5'-end of the genomic RNA. This uridylylated form acts as a nucleotide-peptide primer for the polymerase. In terms of processing, potyviral RNA is expressed as two polyproteins which undergo post-translational proteolytic processing. Genome polyprotein is processed by NIa-pro, P1 and HC-pro proteinases resulting in the production of at least ten individual proteins. P3N-PIPO polyprotein is cleaved by P1 and HC-pro proteinases resulting in the production of three individual proteins. The P1 proteinase and the HC-pro cleave only their respective C-termini autocatalytically. 6K1 is essential for proper proteolytic separation of P3 from CI.

The protein resides in the host cytoplasmic vesicle. It localises to the host nucleus. Its subcellular location is the virion. The catalysed reaction is RNA(n) + a ribonucleoside 5'-triphosphate = RNA(n+1) + diphosphate. The enzyme catalyses Hydrolyzes glutaminyl bonds, and activity is further restricted by preferences for the amino acids in P6 - P1' that vary with the species of potyvirus, e.g. Glu-Xaa-Xaa-Tyr-Xaa-Gln-|-(Ser or Gly) for the enzyme from tobacco etch virus. The natural substrate is the viral polyprotein, but other proteins and oligopeptides containing the appropriate consensus sequence are also cleaved.. It carries out the reaction Hydrolyzes a Gly-|-Gly bond at its own C-terminus, commonly in the sequence -Tyr-Xaa-Val-Gly-|-Gly, in the processing of the potyviral polyprotein.. In terms of biological role, required for aphid transmission and also has proteolytic activity. Only cleaves a Gly-Gly dipeptide at its own C-terminus. Interacts with virions and aphid stylets. Acts as a suppressor of RNA-mediated gene silencing, also known as post-transcriptional gene silencing (PTGS), a mechanism of plant viral defense that limits the accumulation of viral RNAs. May have RNA-binding activity. Functionally, has helicase activity. It may be involved in replication. Its function is as follows. Indispensable for virus replication. Mediates the cap-independent, EIF4E-dependent translation of viral genomic RNAs. Binds to the cap-binding site of host EIF4E and thus interferes with the host EIF4E-dependent mRNA export and translation. VPg-RNA directly binds EIF4E and is a template for transcription. Also forms trimeric complexes with EIF4E-EIF4G, which are templates for translation. In terms of biological role, has RNA-binding and proteolytic activities. Functionally, an RNA-dependent RNA polymerase that plays an essential role in the virus replication. Its function is as follows. Involved in aphid transmission, cell-to-cell and systemis movement, encapsidation of the viral RNA and in the regulation of viral RNA amplification. This is Genome polyprotein from Lettuce mosaic virus (strain E) (LMV).